A 291-amino-acid chain; its full sequence is Pantothenate synthetase (291 aa).

30–37 (MGYLHAGH) is a binding site for ATP. The active-site Proton donor is the His-37. A (R)-pantoate-binding site is contributed by Gln-61. Gln-61 is a beta-alanine binding site. An ATP-binding site is contributed by 147 to 150 (GEKD). Gln-153 is a (R)-pantoate binding site. ATP is bound by residues Val-176 and 184-187 (LSSR).

The protein belongs to the pantothenate synthetase family. Homodimer.

It localises to the cytoplasm. It carries out the reaction (R)-pantoate + beta-alanine + ATP = (R)-pantothenate + AMP + diphosphate + H(+). Its pathway is cofactor biosynthesis; (R)-pantothenate biosynthesis; (R)-pantothenate from (R)-pantoate and beta-alanine: step 1/1. In terms of biological role, catalyzes the condensation of pantoate with beta-alanine in an ATP-dependent reaction via a pantoyl-adenylate intermediate. This is Pantothenate synthetase from Rhizobium rhizogenes (strain K84 / ATCC BAA-868) (Agrobacterium radiobacter).